A 243-amino-acid chain; its full sequence is MNSEKIFYDILNVAAENVDLEFNDKKYNQFIQYKDLLKDWNGKVNLTAITEDEEIIKKHFIDSMKIFQFEYLRKANKIIDIGTGGGFPGIPMKIMRPDADIVLLDSLKKRINVLDDILNKIGINDVETIHGRAEEFAKNPKYREKFDAVVSRAVANLASLSEFCLPYVKVGGYFVALKGPAVDEEVKIAKKAISILGGKLEEIREVEIEDSDLKHNLVIIKKIKNTPKQYPRKPGTATKKPLI.

Residues glycine 82, phenylalanine 87, 133–134 (AE), and arginine 152 contribute to the S-adenosyl-L-methionine site.

It belongs to the methyltransferase superfamily. RNA methyltransferase RsmG family.

The protein localises to the cytoplasm. In terms of biological role, specifically methylates the N7 position of a guanine in 16S rRNA. In Clostridium novyi (strain NT), this protein is Ribosomal RNA small subunit methyltransferase G.